Reading from the N-terminus, the 343-residue chain is Dihydroorotase (343 aa).

Zn(2+)-binding residues include H13 and H15. Substrate is bound by residues 15-17 (HLR) and N41. Zn(2+) contacts are provided by K99, H136, and H174. The residue at position 99 (K99) is an N6-carboxylysine. H136 provides a ligand contact to substrate. L219 provides a ligand contact to substrate. D247 contributes to the Zn(2+) binding site. D247 is a catalytic residue. Residues H251 and A263 each coordinate substrate.

Belongs to the metallo-dependent hydrolases superfamily. DHOase family. Class II DHOase subfamily. Homodimer. Requires Zn(2+) as cofactor.

It carries out the reaction (S)-dihydroorotate + H2O = N-carbamoyl-L-aspartate + H(+). It participates in pyrimidine metabolism; UMP biosynthesis via de novo pathway; (S)-dihydroorotate from bicarbonate: step 3/3. Functionally, catalyzes the reversible cyclization of carbamoyl aspartate to dihydroorotate. The chain is Dihydroorotase from Shewanella baltica (strain OS195).